The chain runs to 331 residues: Glycerol-3-phosphate dehydrogenase [NAD(P)+] (331 aa).

NADPH is bound by residues Trp-14, Arg-34, and Lys-107. Sn-glycerol 3-phosphate-binding residues include Lys-107, Gly-135, and Ser-137. Residue Ala-139 participates in NADPH binding. Sn-glycerol 3-phosphate is bound by residues Lys-190, Asp-243, Ser-253, Arg-254, and Asn-255. Lys-190 (proton acceptor) is an active-site residue. Residue Arg-254 coordinates NADPH. NADPH contacts are provided by Val-278 and Glu-280.

This sequence belongs to the NAD-dependent glycerol-3-phosphate dehydrogenase family.

It localises to the cytoplasm. The enzyme catalyses sn-glycerol 3-phosphate + NAD(+) = dihydroxyacetone phosphate + NADH + H(+). It carries out the reaction sn-glycerol 3-phosphate + NADP(+) = dihydroxyacetone phosphate + NADPH + H(+). Its pathway is membrane lipid metabolism; glycerophospholipid metabolism. Catalyzes the reduction of the glycolytic intermediate dihydroxyacetone phosphate (DHAP) to sn-glycerol 3-phosphate (G3P), the key precursor for phospholipid synthesis. The sequence is that of Glycerol-3-phosphate dehydrogenase [NAD(P)+] from Caulobacter vibrioides (strain ATCC 19089 / CIP 103742 / CB 15) (Caulobacter crescentus).